Here is a 943-residue protein sequence, read N- to C-terminus: Isoleucine--tRNA ligase (943 aa).

The short motif at 58-68 (PYANGTIHIGH) is the 'HIGH' region element. Residue Glu567 coordinates L-isoleucyl-5'-AMP. The short motif at 608-612 (KMSKS) is the 'KMSKS' region element. Residue Lys611 participates in ATP binding. Positions 906, 909, 926, and 929 each coordinate Zn(2+).

This sequence belongs to the class-I aminoacyl-tRNA synthetase family. IleS type 1 subfamily. As to quaternary structure, monomer. Requires Zn(2+) as cofactor.

It is found in the cytoplasm. It catalyses the reaction tRNA(Ile) + L-isoleucine + ATP = L-isoleucyl-tRNA(Ile) + AMP + diphosphate. In terms of biological role, catalyzes the attachment of isoleucine to tRNA(Ile). As IleRS can inadvertently accommodate and process structurally similar amino acids such as valine, to avoid such errors it has two additional distinct tRNA(Ile)-dependent editing activities. One activity is designated as 'pretransfer' editing and involves the hydrolysis of activated Val-AMP. The other activity is designated 'posttransfer' editing and involves deacylation of mischarged Val-tRNA(Ile). The protein is Isoleucine--tRNA ligase of Pseudomonas syringae pv. tomato (strain ATCC BAA-871 / DC3000).